We begin with the raw amino-acid sequence, 138 residues long: Protein Turandot B (138 aa).

Residues 1-21 form the signal peptide; sequence MNFKTSLICFALLLIGTLCSA.

Belongs to the Turandot family.

Its subcellular location is the secreted. A humoral factor that may play a role in stress tolerance. This is Protein Turandot B from Drosophila melanogaster (Fruit fly).